Reading from the N-terminus, the 651-residue chain is Peptidoglycan D,D-transpeptidase MrdA (651 aa).

A helical transmembrane segment spans residues 30-50; the sequence is LVAFLGILLLTGVLFTNIYQL. Ser338 serves as the catalytic Acyl-ester intermediate.

This sequence belongs to the transpeptidase family. MrdA subfamily.

The protein resides in the cell inner membrane. The catalysed reaction is Preferential cleavage: (Ac)2-L-Lys-D-Ala-|-D-Ala. Also transpeptidation of peptidyl-alanyl moieties that are N-acyl substituents of D-alanine.. Its pathway is cell wall biogenesis; peptidoglycan biosynthesis. In terms of biological role, catalyzes cross-linking of the peptidoglycan cell wall. The sequence is that of Peptidoglycan D,D-transpeptidase MrdA from Haemophilus influenzae (strain ATCC 51907 / DSM 11121 / KW20 / Rd).